The primary structure comprises 793 residues: Phosphoribosylformylglycinamidine synthase subunit PurL (793 aa).

H53 is a catalytic residue. ATP contacts are provided by Y56 and K95. E97 is a Mg(2+) binding site. Substrate is bound by residues 98–101 (SHNH) and R120. H99 acts as the Proton acceptor in catalysis. D121 provides a ligand contact to Mg(2+). Q244 contacts substrate. D272 serves as a coordination point for Mg(2+). 316–318 (ESQ) contacts substrate. D523 and G560 together coordinate ATP. N561 contacts Mg(2+). Position 563 (S563) interacts with substrate.

Belongs to the FGAMS family. In terms of assembly, monomer. Part of the FGAM synthase complex composed of 1 PurL, 1 PurQ and 2 PurS subunits.

The protein resides in the cytoplasm. The catalysed reaction is N(2)-formyl-N(1)-(5-phospho-beta-D-ribosyl)glycinamide + L-glutamine + ATP + H2O = 2-formamido-N(1)-(5-O-phospho-beta-D-ribosyl)acetamidine + L-glutamate + ADP + phosphate + H(+). It functions in the pathway purine metabolism; IMP biosynthesis via de novo pathway; 5-amino-1-(5-phospho-D-ribosyl)imidazole from N(2)-formyl-N(1)-(5-phospho-D-ribosyl)glycinamide: step 1/2. Functionally, part of the phosphoribosylformylglycinamidine synthase complex involved in the purines biosynthetic pathway. Catalyzes the ATP-dependent conversion of formylglycinamide ribonucleotide (FGAR) and glutamine to yield formylglycinamidine ribonucleotide (FGAM) and glutamate. The FGAM synthase complex is composed of three subunits. PurQ produces an ammonia molecule by converting glutamine to glutamate. PurL transfers the ammonia molecule to FGAR to form FGAM in an ATP-dependent manner. PurS interacts with PurQ and PurL and is thought to assist in the transfer of the ammonia molecule from PurQ to PurL. The protein is Phosphoribosylformylglycinamidine synthase subunit PurL of Prochlorococcus marinus (strain SARG / CCMP1375 / SS120).